The chain runs to 616 residues: Chaperone protein HscA (616 aa).

It belongs to the heat shock protein 70 family.

Its function is as follows. Chaperone involved in the maturation of iron-sulfur cluster-containing proteins. Has a low intrinsic ATPase activity which is markedly stimulated by HscB. Involved in the maturation of IscU. This chain is Chaperone protein HscA, found in Edwardsiella ictaluri (strain 93-146).